Here is a 192-residue protein sequence, read N- to C-terminus: uncharacterized protein (192 aa).

Positions 168-192 are disordered; that stretch reads PLWRKSEAGSRKARTSNSGGPTKRA. Over residues 182 to 192 the composition is skewed to polar residues; it reads TSNSGGPTKRA.

The protein to A.xylinum IS1268 ORFA.

This is an uncharacterized protein from Sinorhizobium fredii (strain NBRC 101917 / NGR234).